Here is a 181-residue protein sequence, read N- to C-terminus: TATA-box-binding protein (181 aa).

2 tandem repeats follow at residues 7–83 (IVNV…IKEL) and 98–173 (VQNM…SATL).

The protein belongs to the TBP family.

In terms of biological role, general factor that plays a role in the activation of archaeal genes transcribed by RNA polymerase. Binds specifically to the TATA box promoter element which lies close to the position of transcription initiation. This is TATA-box-binding protein from Methanococcus vannielii (strain ATCC 35089 / DSM 1224 / JCM 13029 / OCM 148 / SB).